A 252-amino-acid polypeptide reads, in one-letter code: Indole-3-glycerol phosphate synthase (252 aa).

Belongs to the TrpC family.

The enzyme catalyses 1-(2-carboxyphenylamino)-1-deoxy-D-ribulose 5-phosphate + H(+) = (1S,2R)-1-C-(indol-3-yl)glycerol 3-phosphate + CO2 + H2O. The protein operates within amino-acid biosynthesis; L-tryptophan biosynthesis; L-tryptophan from chorismate: step 4/5. This is Indole-3-glycerol phosphate synthase from Leptospira interrogans serogroup Icterohaemorrhagiae serovar copenhageni (strain Fiocruz L1-130).